A 379-amino-acid polypeptide reads, in one-letter code: Cytochrome b (379 aa).

The next 4 helical transmembrane spans lie at 34 to 54 (FGSL…LLAM), 78 to 99 (WLIR…YFHI), 114 to 134 (WNTG…GYVL), and 179 to 199 (FFAL…IHLT). 2 residues coordinate heme b: histidine 84 and histidine 98. Positions 183 and 197 each coordinate heme b. Histidine 202 provides a ligand contact to a ubiquinone. 4 consecutive transmembrane segments (helical) span residues 227–247 (LKDI…TFFS), 289–309 (LGGV…PLLH), 321–341 (FSQV…WVGS), and 348–368 (FIAI…VLFP).

It belongs to the cytochrome b family. In terms of assembly, the cytochrome bc1 complex contains 11 subunits: 3 respiratory subunits (MT-CYB, CYC1 and UQCRFS1), 2 core proteins (UQCRC1 and UQCRC2) and 6 low-molecular weight proteins (UQCRH/QCR6, UQCRB/QCR7, UQCRQ/QCR8, UQCR10/QCR9, UQCR11/QCR10 and a cleavage product of UQCRFS1). This cytochrome bc1 complex then forms a dimer. Heme b is required as a cofactor.

It is found in the mitochondrion inner membrane. In terms of biological role, component of the ubiquinol-cytochrome c reductase complex (complex III or cytochrome b-c1 complex) that is part of the mitochondrial respiratory chain. The b-c1 complex mediates electron transfer from ubiquinol to cytochrome c. Contributes to the generation of a proton gradient across the mitochondrial membrane that is then used for ATP synthesis. The chain is Cytochrome b (MT-CYB) from Apteryx australis (Southern brown kiwi).